The following is a 313-amino-acid chain: Pantothenate synthetase (313 aa).

43-50 (MGALHEGH) contacts ATP. His50 (proton donor) is an active-site residue. Gln75 is a (R)-pantoate binding site. Gln75 contributes to the beta-alanine binding site. An ATP-binding site is contributed by 161 to 164 (GEKD). Gln167 provides a ligand contact to (R)-pantoate. ATP is bound by residues Val190 and 198-201 (LSSR).

The protein belongs to the pantothenate synthetase family. As to quaternary structure, homodimer.

Its subcellular location is the cytoplasm. It carries out the reaction (R)-pantoate + beta-alanine + ATP = (R)-pantothenate + AMP + diphosphate + H(+). It functions in the pathway cofactor biosynthesis; (R)-pantothenate biosynthesis; (R)-pantothenate from (R)-pantoate and beta-alanine: step 1/1. In terms of biological role, catalyzes the condensation of pantoate with beta-alanine in an ATP-dependent reaction via a pantoyl-adenylate intermediate. The protein is Pantothenate synthetase of Mycobacterium sp. (strain KMS).